The chain runs to 82 residues: MALLNKLLCFALVFMIFGEFVTPDCYEDWSRCTPGTSFLTGILWKDCHSRCKELGHRGGRCVDSPSKHCPGVLKNNKQCHCY.

A signal peptide spans 1-23 (MALLNKLLCFALVFMIFGEFVTP). 4 disulfide bridges follow: Cys25–Cys32, Cys47–Cys51, Cys61–Cys69, and Cys79–Cys81.

This sequence belongs to the macin family.

It localises to the secreted. The protein is Neuromacin of Hirudo medicinalis (Medicinal leech).